The primary structure comprises 311 residues: Malate dehydrogenase (311 aa).

Residues Gly-7–Gly-13 and Asp-34 contribute to the NAD(+) site. Residues Arg-81 and Arg-87 each contribute to the substrate site. NAD(+) is bound by residues Asn-94 and Ile-117–Asn-119. Asn-119 and Arg-153 together coordinate substrate. The Proton acceptor role is filled by His-177. Residue Met-227 coordinates NAD(+).

This sequence belongs to the LDH/MDH superfamily. MDH type 1 family. Homodimer.

It carries out the reaction (S)-malate + NAD(+) = oxaloacetate + NADH + H(+). Catalyzes the reversible oxidation of malate to oxaloacetate. The chain is Malate dehydrogenase from Aliivibrio salmonicida (strain LFI1238) (Vibrio salmonicida (strain LFI1238)).